We begin with the raw amino-acid sequence, 314 residues long: Hydroxyacyl-coenzyme A dehydrogenase, mitochondrial (314 aa).

The N-terminal 12 residues, 1-12, are a transit peptide targeting the mitochondrion; the sequence is MAFVTRQFLRSM. Residues 34 to 39 and Asp57 contribute to the NAD(+) site; that span reads GGGLMG. Ser73 contacts CoA. An N6-acetyllysine modification is found at Lys75. Lys80 lines the CoA pocket. Lys80 carries the N6-succinyllysine modification. N6-acetyllysine; alternate occurs at positions 81 and 87. Residues Lys81 and Lys87 each carry the N6-succinyllysine; alternate modification. Glu122 contributes to the NAD(+) binding site. N6-acetyllysine is present on Lys125. Lys127 is a binding site for NAD(+). Lys127 bears the N6-(2-hydroxyisobutyryl)lysine mark. Lys136 bears the N6-acetyllysine; alternate mark. Lys136 carries the post-translational modification N6-succinyllysine; alternate. Positions 149 and 173 each coordinate NAD(+). Ser149 provides a ligand contact to CoA. An N6-acetyllysine modification is found at Lys179. An N6-acetyllysine; alternate mark is found at Lys185, Lys192, and Lys202. 3 positions are modified to N6-succinyllysine; alternate: Lys185, Lys192, and Lys202. Lys206 bears the N6-succinyllysine mark. N6-acetyllysine; alternate is present on residues Lys212 and Lys241. Lys212 and Lys241 each carry N6-succinyllysine; alternate. Residue Lys305 participates in NAD(+) binding. Lys312 carries the post-translational modification N6-acetyllysine; alternate. Residue Lys312 is modified to N6-succinyllysine; alternate.

Belongs to the 3-hydroxyacyl-CoA dehydrogenase family. Homodimer. Interacts with GLUD1; this interaction inhibits the activation of glutamate dehydrogenase 1 (GLUD1). Succinylation at Lys-81, adjacent to a coenzyme A binding site. Desuccinylated by SIRT5. Expressed in liver, kidney, brain, and pancreatic islets.

Its subcellular location is the mitochondrion matrix. It localises to the nucleus. It is found in the cytoplasm. The protein resides in the cytosol. It catalyses the reaction a (3S)-3-hydroxyacyl-CoA + NAD(+) = a 3-oxoacyl-CoA + NADH + H(+). The enzyme catalyses (3S)-3-hydroxybutanoyl-CoA + NAD(+) = acetoacetyl-CoA + NADH + H(+). It carries out the reaction (3S)-hydroxydecanoyl-CoA + NAD(+) = 3-oxodecanoyl-CoA + NADH + H(+). The catalysed reaction is (3S)-hydroxyhexadecanoyl-CoA + NAD(+) = 3-oxohexadecanoyl-CoA + NADH + H(+). It participates in lipid metabolism; fatty acid beta-oxidation. Its function is as follows. Mitochondrial fatty acid beta-oxidation enzyme that catalyzes the third step of the beta-oxidation cycle for medium and short-chain 3-hydroxy fatty acyl-CoAs (C4 to C10). Plays a role in the control of insulin secretion by inhibiting the activation of glutamate dehydrogenase 1 (GLUD1), an enzyme that has an important role in regulating amino acid-induced insulin secretion. Plays a role in the maintenance of normal spermatogenesis through the reduction of fatty acid accumulation in the testes. In terms of biological role, inhibits cell proliferation. This chain is Hydroxyacyl-coenzyme A dehydrogenase, mitochondrial (Hadh), found in Mus musculus (Mouse).